The primary structure comprises 197 residues: Proteinase inhibitor type-2 (197 aa).

The first 24 residues, 1–24 (MAVHKVSFVAHLLVLGMFLLLVDA), serve as a signal peptide directing secretion. A run of 3 repeats spans residues 24–80 (AKAC…DPKN), 81–140 (PNVC…DEPK), and 141–196 (SCTT…PQSA). 8 disulfides stabilise this stretch: Cys27–Cys115, Cys31–Cys111, Cys39–Cys121, Cys51–Cys88, Cys54–Cys72, Cys55–Cys84, Cys61–Cys97, and Cys114–Cys132.

This sequence belongs to the protease inhibitor I20 (potato type II proteinase inhibitor) family.

This is Proteinase inhibitor type-2 from Nicotiana tabacum (Common tobacco).